The following is a 229-amino-acid chain: 7-cyano-7-deazaguanine synthase (229 aa).

9-19 lines the ATP pocket; sequence LSGGLDSATVL. Zn(2+)-binding residues include Cys-188, Cys-198, Cys-201, and Cys-204.

The protein belongs to the QueC family. Requires Zn(2+) as cofactor.

It catalyses the reaction 7-carboxy-7-deazaguanine + NH4(+) + ATP = 7-cyano-7-deazaguanine + ADP + phosphate + H2O + H(+). Its pathway is purine metabolism; 7-cyano-7-deazaguanine biosynthesis. Catalyzes the ATP-dependent conversion of 7-carboxy-7-deazaguanine (CDG) to 7-cyano-7-deazaguanine (preQ(0)). This Methylobacillus flagellatus (strain ATCC 51484 / DSM 6875 / VKM B-1610 / KT) protein is 7-cyano-7-deazaguanine synthase.